The sequence spans 119 residues: Immunity protein WapI (119 aa).

Its function is as follows. Immunity protein component of a toxin-immunity protein module, which functions as a cellular contact-dependent growth inhibition (CDI) system. Neutralizes the tRNase activity of cognate toxin WapA upon expression in E.coli. Does not inhibit WapA from other strains of B.subtilis. The WapA C-terminus cannot be expressed on its own in E.coli, however it can be cloned in the presence of its cognate immunity protein gene. Cell contact is probably necessary for growth inhibition. The protein is Immunity protein WapI (wapI) of Bacillus subtilis subsp. natto (strain BEST195).